Reading from the N-terminus, the 1217-residue chain is ATP-dependent helicase/nuclease subunit A (1217 aa).

The UvrD-like helicase ATP-binding domain maps to Val10–Arg475. Ala31–Thr38 lines the ATP pocket. The region spanning Lys476 to Gly786 is the UvrD-like helicase C-terminal domain.

The protein belongs to the helicase family. AddA subfamily. In terms of assembly, heterodimer of AddA and AddB/RexB. Mg(2+) serves as cofactor.

The enzyme catalyses Couples ATP hydrolysis with the unwinding of duplex DNA by translocating in the 3'-5' direction.. It catalyses the reaction ATP + H2O = ADP + phosphate + H(+). Its function is as follows. The heterodimer acts as both an ATP-dependent DNA helicase and an ATP-dependent, dual-direction single-stranded exonuclease. Recognizes the chi site generating a DNA molecule suitable for the initiation of homologous recombination. The AddA nuclease domain is required for chi fragment generation; this subunit has the helicase and 3' -&gt; 5' nuclease activities. The protein is ATP-dependent helicase/nuclease subunit A of Staphylococcus aureus (strain MSSA476).